The chain runs to 232 residues: Dephospho-CoA kinase (232 aa).

In terms of domain architecture, DPCK spans 3–206 (IVGLTGGIAS…RPLTWIEFWR (204 aa)). 8 to 15 (GGIASGKS) lines the ATP pocket.

It belongs to the CoaE family.

It is found in the peroxisome. It carries out the reaction 3'-dephospho-CoA + ATP = ADP + CoA + H(+). The protein operates within cofactor biosynthesis; coenzyme A biosynthesis; CoA from (R)-pantothenate: step 5/5. Its function is as follows. Catalyzes the phosphorylation of the 3'-hydroxyl group of dephosphocoenzyme A to form coenzyme A. The protein is Dephospho-CoA kinase of Arabidopsis thaliana (Mouse-ear cress).